The following is a 363-amino-acid chain: Serpentine receptor class beta-18 (363 aa).

7 consecutive transmembrane segments (helical) span residues 52 to 72 (LAQFSHVVFSFMGLIIVVVYI), 92 to 112 (MLLFIVAHSIDMIVLHIYHII), 135 to 155 (FRYTFSFCSMGLAICTYCIYI), 172 to 192 (LILAAQICQLIVISSLIIIWV), 218 to 238 (KATIAVFPINFICFFLSIGLF), 276 to 296 (AALMALFSVASLLMRLVYNFL), and 303 to 323 (TIATLSYIMSIYCFTVPLVIV).

It belongs to the nematode receptor-like protein srb family.

The protein resides in the membrane. This Caenorhabditis elegans protein is Serpentine receptor class beta-18 (srb-18).